Here is a 230-residue protein sequence, read N- to C-terminus: uncharacterized protein (230 aa).

Residues 1–18 (MRQYTSKSILFMTAIALS) form the signal peptide.

This is an uncharacterized protein from Pasteurella multocida (strain Pm70).